The following is a 511-amino-acid chain: Maturase K (511 aa).

Belongs to the intron maturase 2 family. MatK subfamily.

Its subcellular location is the plastid. It localises to the chloroplast. Usually encoded in the trnK tRNA gene intron. Probably assists in splicing its own and other chloroplast group II introns. In Phleum pratense (Common timothy), this protein is Maturase K.